The primary structure comprises 378 residues: Quinolinate synthase (378 aa).

Residues His-59 and Ser-80 each contribute to the iminosuccinate site. Cys-125 contacts [4Fe-4S] cluster. Residues Tyr-151–Asn-153 and Ser-168 each bind iminosuccinate. A [4Fe-4S] cluster-binding site is contributed by Cys-212. Residues His-238 to Glu-240 and Thr-255 each bind iminosuccinate. Cys-309 contributes to the [4Fe-4S] cluster binding site.

The protein belongs to the quinolinate synthase family. Type 1 subfamily. [4Fe-4S] cluster is required as a cofactor.

The protein localises to the cytoplasm. It carries out the reaction iminosuccinate + dihydroxyacetone phosphate = quinolinate + phosphate + 2 H2O + H(+). It functions in the pathway cofactor biosynthesis; NAD(+) biosynthesis; quinolinate from iminoaspartate: step 1/1. Functionally, catalyzes the condensation of iminoaspartate with dihydroxyacetone phosphate to form quinolinate. This is Quinolinate synthase from Burkholderia thailandensis (strain ATCC 700388 / DSM 13276 / CCUG 48851 / CIP 106301 / E264).